A 488-amino-acid polypeptide reads, in one-letter code: Cysteine--tRNA ligase (488 aa).

Cys28 serves as a coordination point for Zn(2+). Positions 30–40 (PTVYDDAHLGH) match the 'HIGH' region motif. Positions 209, 239, and 243 each coordinate Zn(2+). The 'KMSKS' region signature appears at 271–275 (KMSKS). Lys274 serves as a coordination point for ATP.

Belongs to the class-I aminoacyl-tRNA synthetase family. As to quaternary structure, monomer. Zn(2+) is required as a cofactor.

It is found in the cytoplasm. It carries out the reaction tRNA(Cys) + L-cysteine + ATP = L-cysteinyl-tRNA(Cys) + AMP + diphosphate. In Helicobacter hepaticus (strain ATCC 51449 / 3B1), this protein is Cysteine--tRNA ligase.